A 505-amino-acid chain; its full sequence is Maturase K (505 aa).

Belongs to the intron maturase 2 family. MatK subfamily.

The protein resides in the plastid. It is found in the chloroplast. Usually encoded in the trnK tRNA gene intron. Probably assists in splicing its own and other chloroplast group II introns. The sequence is that of Maturase K from Calycanthus floridus (Eastern sweetshrub).